The primary structure comprises 304 residues: UDP-3-O-acyl-N-acetylglucosamine deacetylase (304 aa).

Residues histidine 78, histidine 237, and aspartate 241 each coordinate Zn(2+). Histidine 264 (proton donor) is an active-site residue.

This sequence belongs to the LpxC family. Requires Zn(2+) as cofactor.

The catalysed reaction is a UDP-3-O-[(3R)-3-hydroxyacyl]-N-acetyl-alpha-D-glucosamine + H2O = a UDP-3-O-[(3R)-3-hydroxyacyl]-alpha-D-glucosamine + acetate. Its pathway is glycolipid biosynthesis; lipid IV(A) biosynthesis; lipid IV(A) from (3R)-3-hydroxytetradecanoyl-[acyl-carrier-protein] and UDP-N-acetyl-alpha-D-glucosamine: step 2/6. Functionally, catalyzes the hydrolysis of UDP-3-O-myristoyl-N-acetylglucosamine to form UDP-3-O-myristoylglucosamine and acetate, the committed step in lipid A biosynthesis. The chain is UDP-3-O-acyl-N-acetylglucosamine deacetylase from Marinobacter nauticus (strain ATCC 700491 / DSM 11845 / VT8) (Marinobacter aquaeolei).